Here is a 95-residue protein sequence, read N- to C-terminus: Co-chaperonin GroES (95 aa).

It belongs to the GroES chaperonin family. As to quaternary structure, heptamer of 7 subunits arranged in a ring. Interacts with the chaperonin GroEL.

The protein localises to the cytoplasm. In terms of biological role, together with the chaperonin GroEL, plays an essential role in assisting protein folding. The GroEL-GroES system forms a nano-cage that allows encapsulation of the non-native substrate proteins and provides a physical environment optimized to promote and accelerate protein folding. GroES binds to the apical surface of the GroEL ring, thereby capping the opening of the GroEL channel. The chain is Co-chaperonin GroES from Clostridium botulinum (strain ATCC 19397 / Type A).